Consider the following 231-residue polypeptide: Transmembrane gamma-carboxyglutamic acid protein 3 (231 aa).

Positions 1–19 are excised as a propeptide; it reads MAVFLEAKNAHAVLKRFPR. The Gla domain maps to 20-65; sequence ANEFLEELRQGTIERECMEEICSYEEVKEVFENKEKTMEFWKGYPN. The Extracellular portion of the chain corresponds to 20–78; sequence ANEFLEELRQGTIERECMEEICSYEEVKEVFENKEKTMEFWKGYPNAVYSVRDPSQSSD. A 4-carboxyglutamate mark is found at Glu-22, Glu-25, Glu-26, Glu-33, Glu-35, Glu-38, Glu-39, Glu-44, Glu-45, Glu-48, Glu-51, Glu-54, and Glu-58. Cysteines 36 and 41 form a disulfide. A helical membrane pass occupies residues 79–101; sequence AMYVVVPLLGVVLLIVIALFIIW. The Cytoplasmic segment spans residues 102–231; it reads RCQLQKATRH…IVAASPSADK (130 aa). 2 disordered regions span residues 140–165 and 184–231; these read HSQG…SRGG and RLSS…SADK. The segment covering 201–212 has biased composition (polar residues); that stretch reads QEGSSEEASVSY.

Post-translationally, gla residues are produced after subsequent post-translational modifications of glutamate by a vitamin K-dependent gamma-carboxylase.

The protein resides in the membrane. The polypeptide is Transmembrane gamma-carboxyglutamic acid protein 3 (Prrg3) (Mus musculus (Mouse)).